A 1038-amino-acid chain; its full sequence is Probable LRR receptor-like serine/threonine-protein kinase At1g53430 (1038 aa).

An N-terminal signal peptide occupies residues 1-28; that stretch reads MGFIFSTEKVVYVLLLIFVCLENFGSNA. The Extracellular segment spans residues 29–609; the sequence is QLLPEDEVQT…VDTGKPLSNG (581 aa). N-linked (GlcNAc...) asparagine glycans are attached at residues N48, N77, N85, N112, and N127. 6 LRR repeats span residues 113 to 137, 139 to 160, 161 to 184, 185 to 208, 210 to 234, and 236 to 256; these read LTRL…LSQI, LEIL…LGDI, TTLT…LGNL, RSLK…LSNL, NLTE…NWTL, and ERLD…ISNL. 5 N-linked (GlcNAc...) asparagine glycosylation sites follow: N196, N210, N231, N255, and N258. 5 LRR repeats span residues 259 to 281, 282 to 305, 306 to 328, 330 to 351, and 352 to 374; these read LTEL…LRNL, MKMK…IGSM, SELK…TFRN, DAFN…QFII, and NSKE…SCNQ. N339, N363, N471, and N561 each carry an N-linked (GlcNAc...) asparagine glycan. The chain crosses the membrane as a helical span at residues 610–630; it reads AVAGIVIAACAVFGLLVLVIL. Topologically, residues 631–1038 are cytoplasmic; it reads RLTGYLGGKE…LDDLTDVKIE (408 aa). A Phosphothreonine modification is found at T658. The Protein kinase domain maps to 669 to 950; the sequence is FDPENKIGEG…EGKIKVQPPL (282 aa). Residues 675-683 and K697 contribute to the ATP site; that span reads IGEGGFGPV. Position 742 is a phosphotyrosine (Y742). D795 serves as the catalytic Proton acceptor. S828 is subject to Phosphoserine. Residues T829 and T834 each carry the phosphothreonine modification. At Y842 the chain carries Phosphotyrosine. Positions 984–1038 are disordered; that stretch reads RNREQDISSSSMDGPWVDSSFSEPGKDVSLQQQEEGRSSSSSRKLLDDLTDVKIE. The span at 1027–1038 shows a compositional bias: basic and acidic residues; it reads KLLDDLTDVKIE.

Belongs to the protein kinase superfamily. Ser/Thr protein kinase family.

It localises to the membrane. It catalyses the reaction L-seryl-[protein] + ATP = O-phospho-L-seryl-[protein] + ADP + H(+). The catalysed reaction is L-threonyl-[protein] + ATP = O-phospho-L-threonyl-[protein] + ADP + H(+). The polypeptide is Probable LRR receptor-like serine/threonine-protein kinase At1g53430 (Arabidopsis thaliana (Mouse-ear cress)).